Consider the following 27-residue polypeptide: Conotoxin flf14b (27 aa).

Cystine bridges form between Cys6-Cys26 and Cys10-Cys22.

In terms of tissue distribution, expressed by the venom duct.

Its subcellular location is the secreted. The chain is Conotoxin flf14b from Conus anabathrum floridanus (Florida cone).